Reading from the N-terminus, the 818-residue chain is Protein LDB19 (818 aa).

The disordered stretch occupies residues 1-25; the sequence is MAFSRLTSTHQSNHNGYSNSNKKGQ. Thr93 carries the post-translational modification Phosphothreonine. Residues 352 to 361 show a composition bias toward basic and acidic residues; that stretch reads QVKIKESEKS. The segment at 352–374 is disordered; that stretch reads QVKIKESEKSKKPRSHIKRYGEL. Ser384 carries the phosphoserine modification. The disordered stretch occupies residues 388–436; it reads MPSQRLPGEPGREQAPNSSGPASTGNVGLDDENPVNEDEEDQPGSEFIH. The span at 402–413 shows a compositional bias: polar residues; it reads APNSSGPASTGN. The segment covering 416-430 has biased composition (acidic residues); that stretch reads LDDENPVNEDEEDQP. Lys486 participates in a covalent cross-link: Glycyl lysine isopeptide (Lys-Gly) (interchain with G-Cter in ubiquitin). Disordered regions lie at residues 568-590 and 607-644; these read QPIR…NVHN and TPKV…NSNI. Residue Thr619 is modified to Phosphothreonine. Positions 620–629 are enriched in polar residues; that stretch reads PVNSNKSNHS. Ser808 is subject to Phosphoserine.

The protein belongs to the LDB19 family.

The protein resides in the cytoplasm. It localises to the golgi apparatus. Its function is as follows. May be involved in protein-linked oligosaccharide phosphorylation since the deletion reduces the negative charge of the cell surface. Involved in the resistance to EDTA, cadmium chloride, cycloheximide, 6-dimethylaminopurine, methyl caffeate, beta-chloro-L-alanine, caffeine and cerulenin. The chain is Protein LDB19 (LDB19) from Saccharomyces cerevisiae (strain ATCC 204508 / S288c) (Baker's yeast).